The sequence spans 410 residues: Cysteine desulfurase IscS (410 aa).

Residues 80 to 81, N160, Q188, and 208 to 210 contribute to the pyridoxal 5'-phosphate site; these read AT and SGH. N6-(pyridoxal phosphate)lysine is present on K211. T248 contacts pyridoxal 5'-phosphate. Catalysis depends on C334, which acts as the Cysteine persulfide intermediate. Residue C334 coordinates [2Fe-2S] cluster.

The protein belongs to the class-V pyridoxal-phosphate-dependent aminotransferase family. NifS/IscS subfamily. Homodimer. Forms a heterotetramer with IscU, interacts with other sulfur acceptors. Requires pyridoxal 5'-phosphate as cofactor.

It localises to the cytoplasm. It carries out the reaction (sulfur carrier)-H + L-cysteine = (sulfur carrier)-SH + L-alanine. The protein operates within cofactor biosynthesis; iron-sulfur cluster biosynthesis. Its function is as follows. Master enzyme that delivers sulfur to a number of partners involved in Fe-S cluster assembly, tRNA modification or cofactor biosynthesis. Catalyzes the removal of elemental sulfur atoms from cysteine to produce alanine. Functions as a sulfur delivery protein for Fe-S cluster synthesis onto IscU, an Fe-S scaffold assembly protein, as well as other S acceptor proteins. The sequence is that of Cysteine desulfurase IscS from Rickettsia peacockii (strain Rustic).